The chain runs to 427 residues: Glucose-6-phosphate isomerase (427 aa).

E277 functions as the Proton donor in the catalytic mechanism. Active-site residues include H298 and K414.

This sequence belongs to the GPI family.

It localises to the cytoplasm. The catalysed reaction is alpha-D-glucose 6-phosphate = beta-D-fructose 6-phosphate. The protein operates within carbohydrate biosynthesis; gluconeogenesis. It functions in the pathway carbohydrate degradation; glycolysis; D-glyceraldehyde 3-phosphate and glycerone phosphate from D-glucose: step 2/4. In terms of biological role, catalyzes the reversible isomerization of glucose-6-phosphate to fructose-6-phosphate. The polypeptide is Glucose-6-phosphate isomerase (Mycoplasma mycoides subsp. mycoides SC (strain CCUG 32753 / NCTC 10114 / PG1)).